The primary structure comprises 138 residues: Ribulose bisphosphate carboxylase small subunit (138 aa).

Belongs to the RuBisCO small chain family. In terms of assembly, heterohexadecamer of 8 large and 8 small subunits.

Its subcellular location is the plastid. The protein resides in the chloroplast. Functionally, ruBisCO catalyzes two reactions: the carboxylation of D-ribulose 1,5-bisphosphate, the primary event in carbon dioxide fixation, as well as the oxidative fragmentation of the pentose substrate in the photorespiration process. Both reactions occur simultaneously and in competition at the same active site. Although the small subunit is not catalytic it is essential for maximal activity. The sequence is that of Ribulose bisphosphate carboxylase small subunit from Pyropia yezoensis (Susabi-nori).